We begin with the raw amino-acid sequence, 259 residues long: Leucine-rich repeat-containing protein 3B (259 aa).

The N-terminal stretch at 1 to 33 is a signal peptide; it reads MNLVDLWLTRSLSMCLLLQSFVLMILCFHSASM. The 31-residue stretch at 34–64 folds into the LRRNT domain; sequence CPKGCLCSSSGGLNVTCSNANLKEIPRDLPP. N-linked (GlcNAc...) asparagine glycosylation occurs at Asn-47. 3 LRR repeats span residues 65-86, 89-110, and 114-135; these read ETVLLYLDSNQITSIPNEIFKD, QLRVLNLSKNGIEFIDEHAFKG, and TLQTLDLSDNRIQSVHKNAFNN. The N-linked (GlcNAc...) asparagine glycan is linked to Asn-94. The 53-residue stretch at 145-197 folds into the LRRCT domain; that stretch reads NPWHCDCTLQQVLRSMASNHETAHNVICKTSVLDEHAGRPFLNAANDADLCNL. A helical transmembrane segment spans residues 205–225; sequence AMLVTMFGWFTMVISYVVYYV.

It belongs to the LRRC3 family.

The protein localises to the membrane. The chain is Leucine-rich repeat-containing protein 3B (LRRC3B) from Homo sapiens (Human).